The following is a 387-amino-acid chain: Acetylornithine aminotransferase (387 aa).

Pyridoxal 5'-phosphate contacts are provided by residues 97–98 (GT) and Phe130. Arg133 lines the N(2)-acetyl-L-ornithine pocket. 215–218 (DEVQ) lines the pyridoxal 5'-phosphate pocket. Lys244 is subject to N6-(pyridoxal phosphate)lysine. Thr273 contacts pyridoxal 5'-phosphate.

This sequence belongs to the class-III pyridoxal-phosphate-dependent aminotransferase family. ArgD subfamily. In terms of assembly, homodimer. The cofactor is pyridoxal 5'-phosphate.

It is found in the cytoplasm. It catalyses the reaction N(2)-acetyl-L-ornithine + 2-oxoglutarate = N-acetyl-L-glutamate 5-semialdehyde + L-glutamate. It participates in amino-acid biosynthesis; L-arginine biosynthesis; N(2)-acetyl-L-ornithine from L-glutamate: step 4/4. The chain is Acetylornithine aminotransferase from Clostridium acetobutylicum (strain ATCC 824 / DSM 792 / JCM 1419 / IAM 19013 / LMG 5710 / NBRC 13948 / NRRL B-527 / VKM B-1787 / 2291 / W).